A 39-amino-acid polypeptide reads, in one-letter code: Photosystem II reaction center protein L (39 aa).

A helical membrane pass occupies residues 18-38 (SLYLGLLFVFVTGVLMSSYFF).

The protein belongs to the PsbL family. As to quaternary structure, PSII is composed of 1 copy each of membrane proteins PsbA, PsbB, PsbC, PsbD, PsbE, PsbF, PsbH, PsbI, PsbJ, PsbK, PsbL, PsbM, PsbT, PsbX, PsbY, PsbZ, Psb30/Ycf12, peripheral proteins PsbO, CyanoQ (PsbQ), PsbU, PsbV and a large number of cofactors. It forms dimeric complexes.

It is found in the cellular thylakoid membrane. One of the components of the core complex of photosystem II (PSII). PSII is a light-driven water:plastoquinone oxidoreductase that uses light energy to abstract electrons from H(2)O, generating O(2) and a proton gradient subsequently used for ATP formation. It consists of a core antenna complex that captures photons, and an electron transfer chain that converts photonic excitation into a charge separation. This subunit is found at the monomer-monomer interface and is required for correct PSII assembly and/or dimerization. This is Photosystem II reaction center protein L from Synechococcus sp. (strain CC9902).